The sequence spans 310 residues: p-hydroxybenzoic acid efflux pump subunit AaeA (310 aa).

Residues 12 to 32 form a helical membrane-spanning segment; the sequence is AITVVLVILAFIAIFNAWVYY.

The protein belongs to the membrane fusion protein (MFP) (TC 8.A.1) family.

Its subcellular location is the cell inner membrane. In terms of biological role, forms an efflux pump with AaeB. This chain is p-hydroxybenzoic acid efflux pump subunit AaeA, found in Escherichia coli O7:K1 (strain IAI39 / ExPEC).